Reading from the N-terminus, the 107-residue chain is UPF0145 protein YbjQ (107 aa).

It belongs to the UPF0145 family.

This Escherichia coli (strain SMS-3-5 / SECEC) protein is UPF0145 protein YbjQ.